A 631-amino-acid polypeptide reads, in one-letter code: 1-deoxy-D-xylulose-5-phosphate synthase (631 aa).

Thiamine diphosphate contacts are provided by residues His-73 and 114 to 116 (GHS). Mg(2+) is bound at residue Asp-145. Thiamine diphosphate is bound by residues 146–147 (GA), Asn-174, Tyr-285, and Glu-366. Asn-174 serves as a coordination point for Mg(2+).

Belongs to the transketolase family. DXPS subfamily. In terms of assembly, homodimer. Mg(2+) is required as a cofactor. Requires thiamine diphosphate as cofactor.

It catalyses the reaction D-glyceraldehyde 3-phosphate + pyruvate + H(+) = 1-deoxy-D-xylulose 5-phosphate + CO2. It functions in the pathway metabolic intermediate biosynthesis; 1-deoxy-D-xylulose 5-phosphate biosynthesis; 1-deoxy-D-xylulose 5-phosphate from D-glyceraldehyde 3-phosphate and pyruvate: step 1/1. Its function is as follows. Catalyzes the acyloin condensation reaction between C atoms 2 and 3 of pyruvate and glyceraldehyde 3-phosphate to yield 1-deoxy-D-xylulose-5-phosphate (DXP). The polypeptide is 1-deoxy-D-xylulose-5-phosphate synthase (Desulfitobacterium hafniense (strain Y51)).